The following is a 185-amino-acid chain: Mitochondrial inner membrane protease atp23 (185 aa).

Histidine 86 contributes to the a divalent metal cation binding site. Residue glutamate 87 is part of the active site. Histidine 90 serves as a coordination point for a divalent metal cation.

Belongs to the peptidase M76 family.

The protein resides in the mitochondrion inner membrane. Its function is as follows. Has a dual role in the assembly of mitochondrial ATPase. Acts as a protease that removes N-terminal residues of mitochondrial ATPase CF(0) subunit 6 at the intermembrane space side. Also involved in the correct assembly of the membrane-embedded ATPase CF(0) particle, probably mediating association of subunit 6 with the subunit 9 ring. This Schizosaccharomyces pombe (strain 972 / ATCC 24843) (Fission yeast) protein is Mitochondrial inner membrane protease atp23 (atp23).